Reading from the N-terminus, the 868-residue chain is Spindle and centriole-associated protein 1 (868 aa).

Disordered stretches follow at residues 129 to 154 (RTGF…DPGT), 172 to 201 (DDGG…HSNR), 229 to 250 (IAAQ…AEDQ), and 291 to 326 (KPLL…LASS). 2 stretches are compositionally biased toward polar residues: residues 190 to 200 (ELPNSLSPHSN) and 229 to 245 (IAAQ…SSEL). Phosphothreonine is present on T236. Position 240 is a phosphoserine (S240). Positions 315–326 (SSSTTSADLASS) are enriched in low complexity. Residues 381 to 434 (RYLKESETQLRKEVETRQQLEQMLGDHRELIDALTAEILLLREENGAVQARLQQ) adopt a coiled-coil conformation. 2 disordered regions span residues 630–664 (PQFV…LGDG) and 702–722 (SSGG…NASE). The segment covering 634–649 (SLSQPPCSSPPSTQQS) has biased composition (low complexity). Position 655 is a phosphoserine (S655). Residues 706 to 715 (EHGDGLREPS) are compositionally biased toward basic and acidic residues. The stretch at 736 to 764 (SSMEERIAELNRQSMEARSKLLQLIEQQK) forms a coiled coil. Phosphoserine occurs at positions 772, 773, 776, and 831. The interval 805 to 868 (SSKCNTVSPV…GWFALSAHLP (64 aa)) is disordered. Over residues 812–831 (SPVSGVSSRRSSGAISNSCS) the composition is skewed to low complexity.

As to quaternary structure, interacts with CEP120.

The protein localises to the cytoplasm. It localises to the cytoskeleton. Its subcellular location is the microtubule organizing center. It is found in the centrosome. The protein resides in the centriole. The protein localises to the spindle. In terms of biological role, regulator required for centriole duplication, for proper bipolar spindle formation and chromosome congression in mitosis. The polypeptide is Spindle and centriole-associated protein 1 (Spice1) (Rattus norvegicus (Rat)).